The sequence spans 191 residues: UMP-CMP kinase 2 (191 aa).

Residue 12–17 (GSGKGT) participates in ATP binding. Residues 32–62 (SAGDLLRAERQREGSEFGALIESHIKNGSIV) are NMP. A ribonucleoside 5'-phosphate-binding positions include Arg-38, 60 to 62 (SIV), and 88 to 91 (GFPR). Asn-95 contacts CMP. The LID stretch occupies residues 128-136 (NRGQGRTDD). An ATP-binding site is contributed by Arg-129. Residues Arg-133 and Arg-144 each coordinate a ribonucleoside 5'-phosphate. An ATP-binding site is contributed by Arg-172.

Belongs to the adenylate kinase family. UMP-CMP kinase subfamily. As to quaternary structure, monomer. Mg(2+) is required as a cofactor. Expressed in neurons and the pharynx.

The protein resides in the cytoplasm. It localises to the nucleus. It carries out the reaction CMP + ATP = CDP + ADP. It catalyses the reaction dCMP + ATP = dCDP + ADP. The catalysed reaction is UMP + ATP = UDP + ADP. In terms of biological role, catalyzes the phosphorylation of pyrimidine nucleoside monophosphates at the expense of ATP. Plays an important role in de novo pyrimidine nucleotide biosynthesis. Has preference for UMP and CMP as phosphate acceptors. This Caenorhabditis elegans protein is UMP-CMP kinase 2.